The chain runs to 383 residues: Anhydro-N-acetylmuramic acid kinase (383 aa).

9–16 (GTSLDGID) contacts ATP.

It belongs to the anhydro-N-acetylmuramic acid kinase family.

It carries out the reaction 1,6-anhydro-N-acetyl-beta-muramate + ATP + H2O = N-acetyl-D-muramate 6-phosphate + ADP + H(+). It participates in amino-sugar metabolism; 1,6-anhydro-N-acetylmuramate degradation. It functions in the pathway cell wall biogenesis; peptidoglycan recycling. In terms of biological role, catalyzes the specific phosphorylation of 1,6-anhydro-N-acetylmuramic acid (anhMurNAc) with the simultaneous cleavage of the 1,6-anhydro ring, generating MurNAc-6-P. Is required for the utilization of anhMurNAc either imported from the medium or derived from its own cell wall murein, and thus plays a role in cell wall recycling. This is Anhydro-N-acetylmuramic acid kinase from Clostridioides difficile (strain 630) (Peptoclostridium difficile).